Reading from the N-terminus, the 449-residue chain is MRECISVHVGQAGVQIGNACWELFCLEHGIQADGTFGTQASKINDDDSFTTFFSETGNGKHVPRAVMVDLEPTVVDEVRAGTYRQLFHPEQLITGKEDAANNYARGHYTVGKESIDLVLDRIRKLTDACSGLQGFLIFHSFGGGTGSGFTSLLMERLSLDYGKKSKLEFAIYPAPQVSTAVVEPYNSILTTHTTLEHSDCAFMVDNEAIYDICRRNLDIERPTYTNLNRLISQIVSSITASLRFDGALNVDLTEFQTNLVPYPRIHFPLVTYAPIISAEKAYHEQLSVAEITSSCFEPNSQMVKCDPRHGKYMACCMLYRGDVVPKDVNVAIAAIKTKRTIQFVDWCPTGFKVGINYQPPTVVPGGDLAKVQRAVCMLSNTTAIAEAWARLDHKFDLMYAKRAFVHWYVGEGMEEGEFSEAREDLAALEKDYEEVGTDSFEEENEGEEF.

Positions Met1 to Cys4 match the MREC motif motif. GTP contacts are provided by Gln11, Glu71, Ser140, Gly144, Thr145, Thr179, Asn206, and Asn228. Glu71 contributes to the Mg(2+) binding site. Glu254 is a catalytic residue.

This sequence belongs to the tubulin family. Dimer of alpha and beta chains. A typical microtubule is a hollow water-filled tube with an outer diameter of 25 nm and an inner diameter of 15 nM. Alpha-beta heterodimers associate head-to-tail to form protofilaments running lengthwise along the microtubule wall with the beta-tubulin subunit facing the microtubule plus end conferring a structural polarity. Microtubules usually have 13 protofilaments but different protofilament numbers can be found in some organisms and specialized cells. Requires Mg(2+) as cofactor. In terms of processing, some glutamate residues at the C-terminus are polyglycylated, resulting in polyglycine chains on the gamma-carboxyl group. Glycylation is mainly limited to tubulin incorporated into axonemes (cilia and flagella) whereas glutamylation is prevalent in neuronal cells, centrioles, axonemes, and the mitotic spindle. Both modifications can coexist on the same protein on adjacent residues, and lowering polyglycylation levels increases polyglutamylation, and reciprocally. Cilia and flagella glycylation is required for their stability and maintenance. Flagella glycylation controls sperm motility. Post-translationally, some glutamate residues at the C-terminus are polyglutamylated, resulting in polyglutamate chains on the gamma-carboxyl group. Polyglutamylation plays a key role in microtubule severing by spastin (SPAST). SPAST preferentially recognizes and acts on microtubules decorated with short polyglutamate tails: severing activity by SPAST increases as the number of glutamates per tubulin rises from one to eight, but decreases beyond this glutamylation threshold. Glutamylation is also involved in cilia motility. The C-terminal phenylalanine residue is cleaved by MATCAP1/KIAA0895L. In terms of tissue distribution, expressed at highest levels in the testis, followed by skeletal and heart muscle. Expressed at low levels in the developing brain.

The protein localises to the cytoplasm. It is found in the cytoskeleton. The enzyme catalyses GTP + H2O = GDP + phosphate + H(+). Tubulin is the major constituent of microtubules, a cylinder consisting of laterally associated linear protofilaments composed of alpha- and beta-tubulin heterodimers. Microtubules grow by the addition of GTP-tubulin dimers to the microtubule end, where a stabilizing cap forms. Below the cap, tubulin dimers are in GDP-bound state, owing to GTPase activity of alpha-tubulin. The protein is Tubulin alpha-8 chain (Tuba8) of Mus musculus (Mouse).